The sequence spans 342 residues: Alanine racemase (342 aa).

The active-site Proton acceptor; specific for D-alanine is the Lys33. At Lys33 the chain carries N6-(pyridoxal phosphate)lysine. A substrate-binding site is contributed by Arg128. Tyr240 functions as the Proton acceptor; specific for L-alanine in the catalytic mechanism. Residue Met288 coordinates substrate.

It belongs to the alanine racemase family. The cofactor is pyridoxal 5'-phosphate.

It carries out the reaction L-alanine = D-alanine. It participates in amino-acid biosynthesis; D-alanine biosynthesis; D-alanine from L-alanine: step 1/1. Its function is as follows. Catalyzes the interconversion of L-alanine and D-alanine. May also act on other amino acids. This Jannaschia sp. (strain CCS1) protein is Alanine racemase (alr).